The primary structure comprises 805 residues: Transcription factor SFL1 (805 aa).

Over residues 1–24 (MSHLVSSSLGTTTTATPTSRSPHT) the composition is skewed to low complexity. Residues 1 to 110 (MSHLVSSSLG…NNNVSNNNST (110 aa)) are disordered. Over residues 25 to 69 (NHSTPYNQNSITSNRSSPVPKNSVNSRIIPQTMNPPIDMKSNNIL) the composition is skewed to polar residues. Positions 71–85 (PEKDTDTSRGDHSES) are enriched in basic and acidic residues. Residues 86–110 (KASSISSASGTTTTNNNNVSNNNST) are compositionally biased toward low complexity. The DNA-binding element occupies 117–226 (FIHKLYDMLH…LKNIKRRSSK (110 aa)). Disordered regions lie at residues 273–336 (MQSP…NQSP), 438–483 (QSNF…VAPQ), 513–675 (REDS…PAPQ), 691–746 (HQKS…SENH), and 759–805 (VSEL…RKLE). A compositionally biased stretch (low complexity) spans 295–310 (QQQQQQQQQQQQQQQQ). Polar residues-rich tracts occupy residues 454 to 480 (HGNSVSSNYHLESTNVSRNPSTTNLNV) and 533 to 556 (PSRNSSRILIEESTPTHPPTNFNP). Over residues 557-566 (QQSQSQSQVQ) the composition is skewed to low complexity. 3 stretches are compositionally biased toward polar residues: residues 581–597 (ESTYSPLSHSSNKSQIL), 604–614 (VNHSPLVQQQQ), and 622–635 (NDSSVAPPSQSSLP). Low complexity predominate over residues 637-659 (TRPLSRQQQQQQQTLHHPSTTSS). Polar residues predominate over residues 716-738 (PISSTAPTTMITSTSKPTSTSGA).

This sequence belongs to the HSF family.

Its subcellular location is the nucleus. Functionally, transcription factor that plays a role of repressor of filamentous growth and flocculation. Antagonizes functions of SFL2 and FLO8. Plays a role in the hyphal repression induced by secreted factors like dodecanol by competitors such as Pseudomonas aeruginosa and Burkholderia cenocepacia. This chain is Transcription factor SFL1 (SFL1), found in Candida albicans (strain SC5314 / ATCC MYA-2876) (Yeast).